A 226-amino-acid chain; its full sequence is Late protein I226R (226 aa).

A signal peptide spans 1–16 (MKMETFLVCLFHNAAG). Residue N164 is glycosylated (N-linked (GlcNAc...) asparagine; by host).

This sequence belongs to the asfivirus I226R family.

Its function is as follows. Plays a role in the inhibition of host NF-kappa-B and IRF3 signaling pathways. Mechanistically, promotes the degradation of host IKBKG through enhancing its ubiquitination leading to inhibition of both pathways. The chain is Late protein I226R from African swine fever virus (isolate Pig/Kenya/KEN-50/1950) (ASFV).